Here is a 277-residue protein sequence, read N- to C-terminus: Probable cyclic nucleotide phosphodiesterase MCR_0369 (277 aa).

The Fe cation site is built by aspartate 17, histidine 19, aspartate 53, asparagine 83, histidine 165, histidine 204, and histidine 206. AMP is bound by residues histidine 19, aspartate 53, and 83-84 (NH). AMP is bound at residue histidine 206.

The protein belongs to the cyclic nucleotide phosphodiesterase class-III family. The cofactor is Fe(2+).

This chain is Probable cyclic nucleotide phosphodiesterase MCR_0369, found in Moraxella catarrhalis (strain BBH18).